Reading from the N-terminus, the 430-residue chain is Adenylosuccinate synthetase (430 aa).

GTP contacts are provided by residues 12-18 (GDEGKGK) and 40-42 (GHT). The active-site Proton acceptor is the D13. Residues D13 and G40 each coordinate Mg(2+). IMP-binding positions include 13-16 (DEGK), 38-41 (NAGH), T130, R144, Q224, T239, and R303. H41 functions as the Proton donor in the catalytic mechanism. Substrate is bound at residue 299 to 305 (VNTGRKR). GTP contacts are provided by residues R305, 331-333 (KLD), and 413-415 (STS).

It belongs to the adenylosuccinate synthetase family. Homodimer. It depends on Mg(2+) as a cofactor.

Its subcellular location is the cytoplasm. The enzyme catalyses IMP + L-aspartate + GTP = N(6)-(1,2-dicarboxyethyl)-AMP + GDP + phosphate + 2 H(+). It functions in the pathway purine metabolism; AMP biosynthesis via de novo pathway; AMP from IMP: step 1/2. Functionally, plays an important role in the de novo pathway of purine nucleotide biosynthesis. Catalyzes the first committed step in the biosynthesis of AMP from IMP. This Rhodopseudomonas palustris (strain BisB18) protein is Adenylosuccinate synthetase.